A 280-amino-acid chain; its full sequence is ESX-1 secretion-associated protein EspJ (280 aa).

Ser-70 is subject to Phosphoserine. 2 stretches are compositionally biased toward low complexity: residues 167-181 and 246-280; these read QTISQTAQQAAQSAQ and PAQAMDTGAGARPAASPLAAPVDPSTPAPSTTTTL. The tract at residues 167-280 is disordered; it reads QTISQTAQQA…TPAPSTTTTL (114 aa).

Post-translationally, phosphorylated at Ser-70.

The protein localises to the secreted. Functionally, could be involved in regulation of growth and intracellular survival. This is ESX-1 secretion-associated protein EspJ from Mycobacterium tuberculosis (strain CDC 1551 / Oshkosh).